The sequence spans 749 residues: EF-hand domain-containing family member C2 (749 aa).

DM10 domains are found at residues 75-182 (DKQV…RKIG), 226-368 (HGKI…KSKY), and 431-538 (KSNI…EQNT). An EF-hand domain is found at 558–593 (GKSRELKQVFKAADSKHTNMVDYNTFRDILMSLTVG).

Microtubule inner protein component of sperm flagellar doublet microtubules. As to expression, expressed in airway epithelial cells.

It is found in the cytoplasm. It localises to the cytoskeleton. The protein localises to the cilium axoneme. Its subcellular location is the flagellum axoneme. In terms of biological role, microtubule inner protein (MIP) part of the dynein-decorated doublet microtubules (DMTs) in cilia axoneme, which is required for motile cilia beating. The chain is EF-hand domain-containing family member C2 from Homo sapiens (Human).